The chain runs to 419 residues: Maltoporin 2 (419 aa).

The signal sequence occupies residues 1–23; that stretch reads MKTSLRTLSVALAAALVSPSVLA.

It belongs to the porin LamB (TC 1.B.3) family. In terms of assembly, homotrimer formed of three 18-stranded antiparallel beta-barrels, containing three independent channels.

The protein resides in the cell outer membrane. The catalysed reaction is beta-maltose(in) = beta-maltose(out). Functionally, involved in the transport of maltose and maltodextrins. This chain is Maltoporin 2, found in Yersinia pseudotuberculosis serotype O:1b (strain IP 31758).